A 220-amino-acid polypeptide reads, in one-letter code: Probable chemoreceptor glutamine deamidase CheD 2 (220 aa).

It belongs to the CheD family.

It catalyses the reaction L-glutaminyl-[protein] + H2O = L-glutamyl-[protein] + NH4(+). Its function is as follows. Probably deamidates glutamine residues to glutamate on methyl-accepting chemotaxis receptors (MCPs), playing an important role in chemotaxis. In Methanosarcina acetivorans (strain ATCC 35395 / DSM 2834 / JCM 12185 / C2A), this protein is Probable chemoreceptor glutamine deamidase CheD 2.